Reading from the N-terminus, the 80-residue chain is Exodeoxyribonuclease 7 small subunit (80 aa).

This sequence belongs to the XseB family. As to quaternary structure, heterooligomer composed of large and small subunits.

The protein resides in the cytoplasm. It carries out the reaction Exonucleolytic cleavage in either 5'- to 3'- or 3'- to 5'-direction to yield nucleoside 5'-phosphates.. Bidirectionally degrades single-stranded DNA into large acid-insoluble oligonucleotides, which are then degraded further into small acid-soluble oligonucleotides. This Marinomonas sp. (strain MWYL1) protein is Exodeoxyribonuclease 7 small subunit.